A 502-amino-acid polypeptide reads, in one-letter code: Lysine--tRNA ligase (502 aa).

Residues E403 and E410 each coordinate Mg(2+).

This sequence belongs to the class-II aminoacyl-tRNA synthetase family. In terms of assembly, homodimer. The cofactor is Mg(2+).

It localises to the cytoplasm. It catalyses the reaction tRNA(Lys) + L-lysine + ATP = L-lysyl-tRNA(Lys) + AMP + diphosphate. This Parasynechococcus marenigrum (strain WH8102) protein is Lysine--tRNA ligase.